A 664-amino-acid chain; its full sequence is Serine/threonine-protein kinase PknD (664 aa).

At 1 to 381 the chain is on the cytoplasmic side; that stretch reads MSDAVPQVGS…PAGNKRKVWA (381 aa). The region spanning 15-276 is the Protein kinase domain; it reads YQLLRLLGRG…DLAIAAHDAL (262 aa). ATP contacts are provided by residues 21–29 and Lys-44; that span reads LGRGGMGEV. Phosphothreonine; by autocatalysis is present on Thr-135. The active-site Proton acceptor is Asp-138. Phosphothreonine; by autocatalysis occurs at positions 169, 171, 173, and 209. The tract at residues 303 to 333 is disordered; the sequence is TGLSQSESGIAGAGTGPPTPGAARWSPGDSA. A helical membrane pass occupies residues 382–402; it reads VVGAAAIVLVAIVAAAGYLVL. Over 403–664 the chain is Extracellular; the sequence is RPSWSPTQAS…GNDRVVKLTS (262 aa). NHL repeat units lie at residues 414–456, 457–497, 498–539, 540–581, 582–623, and 624–664; these read QTVL…LATG, STGT…LAAG, SNNQ…LAAG, SKTQ…LEAE, SNNQ…LLAG, and STTS…KLTS.

This sequence belongs to the protein kinase superfamily. Ser/Thr protein kinase family. In terms of assembly, homodimer. The extracellular domain interacts with host laminin. Autophosphorylated. Dephosphorylated by PstP.

It is found in the cell membrane. The catalysed reaction is L-seryl-[protein] + ATP = O-phospho-L-seryl-[protein] + ADP + H(+). The enzyme catalyses L-threonyl-[protein] + ATP = O-phospho-L-threonyl-[protein] + ADP + H(+). Its activity is regulated as follows. Dimerization activates the kinase domain of unphosphorylated PknD via an allosteric mechanism, triggering autophosphorylation and phosphorylation of target proteins. Phosphorylated PknD is fully active even in the absence of dimerization. Functionally, part of a signaling pathway that enables adaptation to osmotic stress through cell wall remodeling and virulence factor production. Key microbial factor required for central nervous system tuberculosis. Required for invasion of host brain endothelia, but not macrophages, lung epithelia or other endothelia. The protein is Serine/threonine-protein kinase PknD (pknD) of Mycobacterium tuberculosis (strain CDC 1551 / Oshkosh).